The primary structure comprises 213 residues: Probable nicotinate-nucleotide adenylyltransferase (213 aa).

Belongs to the NadD family.

It carries out the reaction nicotinate beta-D-ribonucleotide + ATP + H(+) = deamido-NAD(+) + diphosphate. The protein operates within cofactor biosynthesis; NAD(+) biosynthesis; deamido-NAD(+) from nicotinate D-ribonucleotide: step 1/1. Functionally, catalyzes the reversible adenylation of nicotinate mononucleotide (NaMN) to nicotinic acid adenine dinucleotide (NaAD). The sequence is that of Probable nicotinate-nucleotide adenylyltransferase from Ruegeria pomeroyi (strain ATCC 700808 / DSM 15171 / DSS-3) (Silicibacter pomeroyi).